A 153-amino-acid polypeptide reads, in one-letter code: uncharacterized protein (153 aa).

The signal sequence occupies residues 1–22 (MKAFNKLFSLVVASVLVFSLAG). The N-palmitoyl cysteine moiety is linked to residue cysteine 23. The S-diacylglycerol cysteine moiety is linked to residue cysteine 23.

It to L.monocytogenes lmo0207.

It is found in the cell membrane. This is an uncharacterized protein from Escherichia coli (strain K12).